A 475-amino-acid chain; its full sequence is Bifunctional protein HldE (475 aa).

The interval 1-318 (MMQYSLKFNQ…ENAIHHREET (318 aa)) is ribokinase. 195–198 (NMAE) provides a ligand contact to ATP. Asp264 is an active-site residue. Residues 344–475 (MTNGCFDILH…DVIKKIQAIR (132 aa)) form a cytidylyltransferase region.

It in the N-terminal section; belongs to the carbohydrate kinase PfkB family. In the C-terminal section; belongs to the cytidylyltransferase family. As to quaternary structure, homodimer.

The catalysed reaction is D-glycero-beta-D-manno-heptose 7-phosphate + ATP = D-glycero-beta-D-manno-heptose 1,7-bisphosphate + ADP + H(+). It carries out the reaction D-glycero-beta-D-manno-heptose 1-phosphate + ATP + H(+) = ADP-D-glycero-beta-D-manno-heptose + diphosphate. It participates in nucleotide-sugar biosynthesis; ADP-L-glycero-beta-D-manno-heptose biosynthesis; ADP-L-glycero-beta-D-manno-heptose from D-glycero-beta-D-manno-heptose 7-phosphate: step 1/4. It functions in the pathway nucleotide-sugar biosynthesis; ADP-L-glycero-beta-D-manno-heptose biosynthesis; ADP-L-glycero-beta-D-manno-heptose from D-glycero-beta-D-manno-heptose 7-phosphate: step 3/4. Its pathway is bacterial outer membrane biogenesis; LOS core biosynthesis. Its function is as follows. Catalyzes the phosphorylation of D-glycero-D-manno-heptose 7-phosphate at the C-1 position to selectively form D-glycero-beta-D-manno-heptose-1,7-bisphosphate. Functionally, catalyzes the ADP transfer from ATP to D-glycero-beta-D-manno-heptose 1-phosphate, yielding ADP-D-glycero-beta-D-manno-heptose. This is Bifunctional protein HldE from Haemophilus ducreyi (strain 35000HP / ATCC 700724).